The chain runs to 201 residues: TATA-box-binding protein 2 (201 aa).

Repeat copies occupy residues 26–102 (LQNI…ARII) and 116–193 (IQNI…YPVL).

It belongs to the TBP family. Belongs to the TFIID complex together with the TBP-associated factors (TAFs). Binds DNA as monomer.

Its subcellular location is the nucleus. General transcription factor that functions at the core of the DNA-binding multiprotein factor TFIID. Binding of TFIID to the TATA box is the initial transcriptional step of the pre-initiation complex (PIC), playing a role in the activation of eukaryotic genes transcribed by RNA polymerase II. This Triticum aestivum (Wheat) protein is TATA-box-binding protein 2 (TBP2).